Here is a 173-residue protein sequence, read N- to C-terminus: Dual-action ribosomal maturation protein DarP (173 aa).

This sequence belongs to the DarP family.

Its subcellular location is the cytoplasm. Its function is as follows. Member of a network of 50S ribosomal subunit biogenesis factors which assembles along the 30S-50S interface, preventing incorrect 23S rRNA structures from forming. Promotes peptidyl transferase center (PTC) maturation. In Pseudomonas syringae pv. tomato (strain ATCC BAA-871 / DC3000), this protein is Dual-action ribosomal maturation protein DarP.